The sequence spans 406 residues: Homocitrate synthase AksA (406 aa).

The Pyruvate carboxyltransferase domain maps to 32–285; the sequence is IYIYDTTLRD…DLGLNLEVLP (254 aa).

The protein belongs to the alpha-IPM synthase/homocitrate synthase family.

The enzyme catalyses acetyl-CoA + 2-oxoglutarate + H2O = (2R)-homocitrate + CoA + H(+). It catalyses the reaction 2-oxoadipate + acetyl-CoA + H2O = (R)-dihomocitrate + CoA + H(+). The catalysed reaction is 2-oxoheptanedioate + acetyl-CoA + H2O = (R)-trihomocitrate + CoA + H(+). Its pathway is organic acid metabolism; 2-oxosuberate biosynthesis. Its function is as follows. Catalyzes the condensation of alpha-ketoglutarate and acetyl-CoA to form (R)-homocitrate. Can also catalyze the condensation of alpha-ketoadipate with acetyl-CoA to form (R)-homo(2)citrate, and the condensation of alpha-ketopimelate with acetyl-CoA to form (R)-homo(3)citrate. These reactions are part of the biosynthesis pathway of coenzyme B and biotin. The protein is Homocitrate synthase AksA (aksA) of Methanocaldococcus jannaschii (strain ATCC 43067 / DSM 2661 / JAL-1 / JCM 10045 / NBRC 100440) (Methanococcus jannaschii).